The primary structure comprises 457 residues: Cell division cycle 20.1, cofactor of APC complex (457 aa).

7 WD repeats span residues V138 to L175, E180 to T219, G223 to E260, G264 to T303, E312 to S354, D356 to E397, and G400 to K439.

This sequence belongs to the WD repeat CDC20/Fizzy family. As to quaternary structure, the APC/C is composed of at least 11 subunits that stay tightly associated throughout the cell cycle. Interacts with APC10, FZR1, FZR2, FZR3. Binds to GIG1 and PYM. Part of the mitotic checkpoint complex (MCC); interacts with MAD2, BUB3.1, BUBR1 and BUB1. Binds to cyclins CYCA1-2, CYCB2-1 and CYCB2-2. Interacts with PANS1. In terms of tissue distribution, expressed in meristems and organ primordia. Present in flowers, leaves, stems, roots, pollen grains and developing seeds.

The protein localises to the nucleus. The protein operates within protein modification; protein ubiquitination. Functionally, component of the anaphase promoting complex/cyclosome (APC/C), a cell cycle-regulated E3 ubiquitin-protein ligase complex that controls progression through mitosis and the G1 phase of the cell cycle. In Arabidopsis thaliana (Mouse-ear cress), this protein is Cell division cycle 20.1, cofactor of APC complex (CDC20-1).